Consider the following 446-residue polypeptide: Phosphoglucosamine mutase (446 aa).

Residue S99 is the Phosphoserine intermediate of the active site. Residues S99, D242, D244, and D246 each coordinate Mg(2+). S99 carries the post-translational modification Phosphoserine.

It belongs to the phosphohexose mutase family. Mg(2+) serves as cofactor. Post-translationally, activated by phosphorylation.

The catalysed reaction is alpha-D-glucosamine 1-phosphate = D-glucosamine 6-phosphate. In terms of biological role, catalyzes the conversion of glucosamine-6-phosphate to glucosamine-1-phosphate. In Campylobacter fetus subsp. fetus (strain 82-40), this protein is Phosphoglucosamine mutase.